A 966-amino-acid polypeptide reads, in one-letter code: Insulin-degrading enzyme-like 2 (966 aa).

Residue His71 coordinates Zn(2+). Catalysis depends on Glu74, which acts as the Proton acceptor. His75 provides a ligand contact to Zn(2+). Glu145 is a catalytic residue. Glu152 serves as a coordination point for Zn(2+).

Belongs to the peptidase M16 family. It depends on Zn(2+) as a cofactor.

This chain is Insulin-degrading enzyme-like 2, found in Arabidopsis thaliana (Mouse-ear cress).